The primary structure comprises 530 residues: Inactive ubiquitin carboxyl-terminal hydrolase 17-like protein 8 (530 aa).

The region spanning 80 to 375 (AGLQNMGNTC…QAYVLFYIQK (296 aa)) is the USP domain. Positions 382–392 (SESVSRGREPR) are enriched in basic and acidic residues. Disordered regions lie at residues 382 to 412 (SESVSRGREPRALGAEDTDRPATQGELKRDH) and 493 to 530 (NSTDQESMNTGTLASLQGRTRRSKGKNKHSKRSLLVCQ). The segment covering 495–510 (TDQESMNTGTLASLQG) has biased composition (polar residues). Basic residues predominate over residues 511–524 (RTRRSKGKNKHSKR).

The protein belongs to the peptidase C19 family. USP17 subfamily.

It localises to the nucleus. The protein localises to the endoplasmic reticulum. This Homo sapiens (Human) protein is Inactive ubiquitin carboxyl-terminal hydrolase 17-like protein 8 (USP17L8).